The primary structure comprises 127 residues: Small ribosomal subunit protein uS11 (127 aa).

The protein belongs to the universal ribosomal protein uS11 family. As to quaternary structure, part of the 30S ribosomal subunit. Interacts with proteins S7 and S18. Binds to IF-3.

Its function is as follows. Located on the platform of the 30S subunit, it bridges several disparate RNA helices of the 16S rRNA. Forms part of the Shine-Dalgarno cleft in the 70S ribosome. This Chlorobium phaeobacteroides (strain BS1) protein is Small ribosomal subunit protein uS11.